We begin with the raw amino-acid sequence, 24 residues long: Lectin (24 aa).

Residues 1–18 (AEEQSFSSTKFSTDQPNL) show a composition bias toward polar residues. Residues 1 to 24 (AEEQSFSSTKFSTDQPNLILQGDA) form a disordered region.

Belongs to the leguminous lectin family. Homotetramer.

In Crotalaria juncea (Sunn hemp), this protein is Lectin.